The sequence spans 331 residues: Thiamine thiazole synthase (331 aa).

Residues C86, E107 to A108, G115, and V183 contribute to the substrate site. C220 is subject to 2,3-didehydroalanine (Cys). Residues D222, H237, M289, and R299–G301 contribute to the substrate site.

This sequence belongs to the THI4 family. As to quaternary structure, homooctamer. Fe cation is required as a cofactor. Post-translationally, during the catalytic reaction, a sulfide is transferred from Cys-220 to a reaction intermediate, generating a dehydroalanine residue.

Its subcellular location is the cytoplasm. It is found in the nucleus. The catalysed reaction is [ADP-thiazole synthase]-L-cysteine + glycine + NAD(+) = [ADP-thiazole synthase]-dehydroalanine + ADP-5-ethyl-4-methylthiazole-2-carboxylate + nicotinamide + 3 H2O + 2 H(+). In terms of biological role, involved in biosynthesis of the thiamine precursor thiazole. Catalyzes the conversion of NAD and glycine to adenosine diphosphate 5-(2-hydroxyethyl)-4-methylthiazole-2-carboxylic acid (ADT), an adenylated thiazole intermediate. The reaction includes an iron-dependent sulfide transfer from a conserved cysteine residue of the protein to a thiazole intermediate. The enzyme can only undergo a single turnover, which suggests it is a suicide enzyme. May have additional roles in adaptation to various stress conditions and in DNA damage tolerance. In Emericella nidulans (strain FGSC A4 / ATCC 38163 / CBS 112.46 / NRRL 194 / M139) (Aspergillus nidulans), this protein is Thiamine thiazole synthase.